A 468-amino-acid polypeptide reads, in one-letter code: Cysteine--tRNA ligase (468 aa).

Position 33 (C33) interacts with Zn(2+). Residues 35–45 (ATVQGLPHIGH) carry the 'HIGH' region motif. Zn(2+) contacts are provided by C211, H236, and E240. The short motif at 267–271 (KMSKS) is the 'KMSKS' region element. Residue K270 coordinates ATP.

Belongs to the class-I aminoacyl-tRNA synthetase family. In terms of assembly, monomer. Zn(2+) is required as a cofactor.

The protein localises to the cytoplasm. It catalyses the reaction tRNA(Cys) + L-cysteine + ATP = L-cysteinyl-tRNA(Cys) + AMP + diphosphate. The sequence is that of Cysteine--tRNA ligase from Mycobacterium marinum (strain ATCC BAA-535 / M).